A 413-amino-acid polypeptide reads, in one-letter code: Variant surface glycoprotein YnAT 1.3 (413 aa).

Positions 1–22 are cleaved as a signal peptide; it reads MLDNSRARSIVHLLILLKAHVI. N91, N361, and N379 each carry an N-linked (GlcNAc...) asparagine glycan. A lipid anchor (GPI-anchor amidated asparagine) is attached at N379. A propeptide spans 380-413 (removed in mature form); that stretch reads SSNPTSRQNSVVQEPTTVSAAAITPLILPWTLLI.

Its subcellular location is the cell membrane. Functionally, VSG forms a coat on the surface of the parasite. The trypanosome evades the immune response of the host by expressing a series of antigenically distinct VSGs from an estimated 1000 VSG genes. The chain is Variant surface glycoprotein YnAT 1.3 from Trypanosoma congolense.